Here is a 95-residue protein sequence, read N- to C-terminus: Protein J1 homolog (95 aa).

It belongs to the chordopoxvirinae J1 family. In terms of assembly, homodimer. Part of a complex composed of A30, G7, F10 kinase, A15, D2, D3, and J1. Interacts with A45.

The protein resides in the virion. It localises to the host cytoplasm. Late protein which is a part of a large complex required for early virion morphogenesis. This complex participates in the formation of virosomes and the incorporation of virosomal contents into nascent immature virions. J1 protein is required for DNA packaging during immature virions (IV) formation. This chain is Protein J1 homolog, found in Sus scrofa (Pig).